The chain runs to 85 residues: Protein C4 (85 aa).

Glycine 2 carries the N-myristoyl glycine; by host lipid modification. Residues leucine 42–arginine 65 are disordered. Over residues proline 44–threonine 57 the composition is skewed to low complexity.

It belongs to the geminiviridae protein AC4/C4 family. Interacts with Arabidopsis thaliana RCH2, ASK7/ASK-eta and ASK6/ASK-zeta. Phosphorylated by Arabidopsis thaliana ASK7/ASK-eta mainly on threonine and serine residues. Expressed in vascular tissues, and especially in phloem cells.

Its subcellular location is the host cell membrane. Its function is as follows. Major determinant of pathogenesis that affects the hyperplastic response of the host to viral infection. Mediates the induction of cell division in permissive cells, mainly in phloem. May act as a suppressor of RNA-mediated gene silencing, also known as post-transcriptional gene silencing (PTGS), a mechanism of plant viral defense that limits the accumulation of viral RNAs. The protein is Protein C4 of Beet curly top virus (strain California/Logan) (BCTV).